Reading from the N-terminus, the 195-residue chain is NADH-quinone oxidoreductase subunit B (195 aa).

Positions 74, 75, 139, and 169 each coordinate [4Fe-4S] cluster.

The protein belongs to the complex I 20 kDa subunit family. As to quaternary structure, NDH-1 is composed of 14 different subunits. Subunits NuoB, C, D, E, F, and G constitute the peripheral sector of the complex. The cofactor is [4Fe-4S] cluster.

The protein resides in the cell inner membrane. The catalysed reaction is a quinone + NADH + 5 H(+)(in) = a quinol + NAD(+) + 4 H(+)(out). NDH-1 shuttles electrons from NADH, via FMN and iron-sulfur (Fe-S) centers, to quinones in the respiratory chain. The immediate electron acceptor for the enzyme in this species is believed to be ubiquinone. Couples the redox reaction to proton translocation (for every two electrons transferred, four hydrogen ions are translocated across the cytoplasmic membrane), and thus conserves the redox energy in a proton gradient. The chain is NADH-quinone oxidoreductase subunit B from Methylobacterium sp. (strain 4-46).